Reading from the N-terminus, the 431-residue chain is Probable glucarate dehydratase (431 aa).

4 residues coordinate substrate: histidine 29, threonine 108, tyrosine 153, and lysine 198. Lysine 200 serves as the catalytic Proton acceptor. Mg(2+) is bound by residues aspartate 228 and asparagine 276. Residues 228–230 (DPN), asparagine 276, 327–329 (HSN), histidine 356, and arginine 410 each bind substrate. The active-site Proton acceptor is histidine 327.

Belongs to the mandelate racemase/muconate lactonizing enzyme family. GlucD subfamily. Mg(2+) serves as cofactor.

It catalyses the reaction D-glucarate = 5-dehydro-4-deoxy-D-glucarate + H2O. It participates in carbohydrate acid metabolism; D-glucarate degradation; 2,5-dioxopentanoate from D-glucarate: step 1/2. Its function is as follows. Catalyzes the dehydration of glucarate to 5-keto-4-deoxy-D-glucarate (5-kdGluc). This is Probable glucarate dehydratase (gudD) from Streptomyces coelicolor (strain ATCC BAA-471 / A3(2) / M145).